A 338-amino-acid polypeptide reads, in one-letter code: Protein FosB (338 aa).

Disordered stretches follow at residues 1 to 54 (MFQA…PGSF) and 80 to 162 (AQSQ…RVRR). A compositionally biased stretch (polar residues) spans 13 to 31 (SRCSSSPSAESQYLSSVDS). Position 27 is a phosphoserine (Ser-27). The segment covering 113 to 124 (SSGGASGSGGPS) has biased composition (gly residues). Over residues 125 to 137 (TSGTTSGPGPARP) the composition is skewed to low complexity. In terms of domain architecture, bZIP spans 155 to 218 (EEKRRVRRER…ERLEFVLVAH (64 aa)). A basic motif region spans residues 157–182 (KRRVRRERNKLAAAKCRNRRRELTDR). A leucine-zipper region spans residues 183 to 211 (LQAETDQLEEEKAELESEIAELQKEKERL). Disordered stretches follow at residues 222 to 271 (CKIP…TSQD) and 315 to 338 (AGTQ…LLAL). Pro residues predominate over residues 256–265 (LPPPPAPPLP). Positions 318–338 (QRPSGSDQPTDPLNSPSLLAL) are enriched in polar residues.

This sequence belongs to the bZIP family. Fos subfamily. As to quaternary structure, heterodimer; binds to DNA as heterodimer. Component of an AP-1 transcription factor complex; composed of FOS-JUN heterodimers. As part of the AP-1 transcription factor complex, forms heterodimers with JUN, JUNB or JUND, thereby binding to the AP-1 consensus sequence and stimulating transcription. Interacts with the BAF multiprotein chromatin-remodeling complex subunits SMARCB1 and SMARCD1. Interacts with ARID1A and JUN. Post-translationally, phosphorylated.

Its subcellular location is the nucleus. Functionally, heterodimerizes with proteins of the JUN family to form an AP-1 transcription factor complex, thereby enhancing their DNA binding activity to an AP-1 consensus sequence 5'-TGA[GC]TCA-3' and enhancing their transcriptional activity. Exhibits transactivation activity in vitro. As part of the AP-1 complex, facilitates enhancer selection together with cell-type-specific transcription factors by collaboratively binding to nucleosomal enhancers and recruiting the SWI/SNF (BAF) chromatin remodeling complex to establish accessible chromatin. Together with JUN, plays a role in activation-induced cell death of T cells by binding to the AP-1 promoter site of FASLG/CD95L, and inducing its transcription in response to activation of the TCR/CD3 signaling pathway. Involved in the display of nurturing behavior towards newborns. May play a role in neurogenesis in the hippocampus and in learning and memory-related tasks by regulating the expression of various genes involved in neurogenesis, depression and epilepsy. Implicated in behavioral responses related to morphine reward and spatial memory. In Canis lupus familiaris (Dog), this protein is Protein FosB (FOSB).